The following is a 93-amino-acid chain: Acylphosphatase (93 aa).

Cys5 and Cys49 form a disulfide bridge. Positions Cys5–Tyr93 constitute an Acylphosphatase-like domain. Catalysis depends on residues Arg20 and Asn38.

The protein belongs to the acylphosphatase family.

The enzyme catalyses an acyl phosphate + H2O = a carboxylate + phosphate + H(+). This chain is Acylphosphatase, found in Salmonella typhi.